A 623-amino-acid chain; its full sequence is MEIVYVYLKKRSEFGKQCNFSDRQAELNIDILPNPELAALYVERNPVDTGIQCSASMSEHEANTERFEMESCGVNHVEGGWPKDVNPQELEQTIRFRKKVEKDENYINAVMQLGSIMEHCIKQNNAIDIYEEYFDDEEAVEVTEEAPSAKTINVFRDPQEIKRTATHLSWHPDGNRKLAVAYSCLKFQRAPMSMNYDSYIWDLENPNRPEIALKPLSPLVTLEYNPKDSHVLLGGCYNGQIACWDTRKGSLVAELSTIEFSHRDPVYGTIWLQSKTGTECFSASTDGQVMWWDIRKISEPIEVVIMDISRKEQLENALGAISLEFESTLPTKFMVGTEQGIVISCNRKAKTQAEKIVCTFYGHHGPIYALQRNPFYPKNFLTVGDWTARIWSEDSRESSIMWTKYHMAYLSDGAWSPVRPAVFFTTKMDGTLDIWDLVFKQCDPALSLKVCDDPLFCLRVQDNGCLIACGSELGTTTLLEVSSSLSTLQRNEKNIASSIFERETRREKILEARHREMRLKEKGKVEGKEDDQKEEEAALDLDELVGKAEEEFFEVIFSELKRKEAEALKKKPKPRKKSSVKVEAEEEVEENVGEEEEAGGIIGIDAVEDMSEEAGEEQEDVPT.

WD repeat units follow at residues 214–254 (KPLS…LVAE), 261–302 (SHRD…EPIE), 362–401 (GHHG…SSIM), 405–445 (YHMA…CDPA), and 450–489 (VCDD…STLQ). A disordered region spans residues 565 to 602 (AEALKKKPKPRKKSSVKVEAEEEVEENVGEEEEAGGII). Basic residues predominate over residues 570–579 (KKPKPRKKSS). Positions 584 to 598 (AEEEVEENVGEEEEA) are enriched in acidic residues.

Belongs to the dynein intermediate chain family. As to quaternary structure, consists of at least two heavy chains and a number of intermediate and light chains. Interacts with DNAAF2. Interacts with DNAAF6/PIH1D3. Interacts with HEATR2; probably involved in outer arm dynein assembly. Interacts with CFAP53. In terms of tissue distribution, predominantly expressed in ovary, testis and lung.

Its subcellular location is the cytoplasm. The protein resides in the cytoskeleton. The protein localises to the cilium axoneme. It localises to the dynein axonemal particle. Part of the dynein complex of respiratory cilia. The polypeptide is Dynein axonemal intermediate chain 2 (Dnai2) (Mus musculus (Mouse)).